The following is a 715-amino-acid chain: Putative macrophage stimulating 1-like protein (715 aa).

An N-terminal signal peptide occupies residues 1–20; the sequence is MAPAPVTLLAPGAASSMSCS. A PAN domain is found at 21 to 110; the sequence is QPGQRSPSND…GRCDLFQEKG (90 aa). 4 Kringle domains span residues 63-156, 160-238, 252-345, and 353-464; these read GRCG…IKSC, ACVW…LPRC, SCFR…IRRC, and DCYH…LRRC. Disulfide bonds link C127/C151, C161/C238, C182/C221, C210/C233, C253/C345, C316/C339, C354/C464, C375/C447, C511/C527, C606/C671, C636/C650, and C661/C689. Positions 488–713 constitute a Peptidase S1 domain; sequence VAGGHPGNSP…FVDWIHKVMR (226 aa).

The protein belongs to the peptidase S1 family. Plasminogen subfamily.

The protein localises to the secreted. The polypeptide is Putative macrophage stimulating 1-like protein (MST1L) (Homo sapiens (Human)).